The chain runs to 272 residues: Shikimate dehydrogenase (NADP(+)) (272 aa).

Shikimate contacts are provided by residues 14-16 (SLS) and T61. Residue K65 is the Proton acceptor of the active site. D102 provides a ligand contact to shikimate. NADP(+) contacts are provided by residues 127–131 (GAGGA), 151–156 (NRTPSK), and L215. Shikimate is bound at residue Y217. Residue G239 coordinates NADP(+).

It belongs to the shikimate dehydrogenase family. In terms of assembly, homodimer.

The catalysed reaction is shikimate + NADP(+) = 3-dehydroshikimate + NADPH + H(+). The protein operates within metabolic intermediate biosynthesis; chorismate biosynthesis; chorismate from D-erythrose 4-phosphate and phosphoenolpyruvate: step 4/7. In terms of biological role, involved in the biosynthesis of the chorismate, which leads to the biosynthesis of aromatic amino acids. Catalyzes the reversible NADPH linked reduction of 3-dehydroshikimate (DHSA) to yield shikimate (SA). In Coxiella burnetii (strain CbuK_Q154) (Coxiella burnetii (strain Q154)), this protein is Shikimate dehydrogenase (NADP(+)).